We begin with the raw amino-acid sequence, 138 residues long: Basic phospholipase A2 homolog CTs-K49a (138 aa).

Residues Met-1–Gly-16 form the signal peptide. Cystine bridges form between Cys-42/Cys-131, Cys-44/Cys-60, Cys-59/Cys-111, Cys-65/Cys-138, Cys-66/Cys-104, and Cys-91/Cys-102. The important for membrane-damaging activities in eukaryotes and bacteria; heparin-binding stretch occupies residues Lys-121–Lys-133.

Belongs to the phospholipase A2 family. Group II subfamily. K49 sub-subfamily. In terms of tissue distribution, expressed by the venom gland.

It localises to the secreted. Snake venom phospholipase A2 homolog that lacks catalytic activity. It shows myotoxic and weak anticoagulant activities. A model of myotoxic mechanism has been proposed: an apo Lys49-PLA2 is activated by the entrance of a hydrophobic molecule (e.g. fatty acid) at the hydrophobic channel of the protein leading to a reorientation of a monomer. This reorientation causes a transition between 'inactive' to 'active' states, causing alignment of C-terminal and membrane-docking sites (MDoS) side-by-side and putting the membrane-disruption sites (MDiS) in the same plane, exposed to solvent and in a symmetric position for both monomers. The MDoS region stabilizes the toxin on membrane by the interaction of charged residues with phospholipid head groups. Subsequently, the MDiS region destabilizes the membrane with penetration of hydrophobic residues. This insertion causes a disorganization of the membrane, allowing an uncontrolled influx of ions (i.e. calcium and sodium), and eventually triggering irreversible intracellular alterations and cell death. The chain is Basic phospholipase A2 homolog CTs-K49a from Trimeresurus stejnegeri (Chinese green tree viper).